The primary structure comprises 492 residues: ATP synthase subunit beta, chloroplastic (492 aa).

170–177 provides a ligand contact to ATP; the sequence is GGAGVGKT.

Belongs to the ATPase alpha/beta chains family. As to quaternary structure, F-type ATPases have 2 components, CF(1) - the catalytic core - and CF(0) - the membrane proton channel. CF(1) has five subunits: alpha(3), beta(3), gamma(1), delta(1), epsilon(1). CF(0) has four main subunits: a(1), b(1), b'(1) and c(9-12).

The protein localises to the plastid. It localises to the chloroplast thylakoid membrane. The catalysed reaction is ATP + H2O + 4 H(+)(in) = ADP + phosphate + 5 H(+)(out). Its function is as follows. Produces ATP from ADP in the presence of a proton gradient across the membrane. The catalytic sites are hosted primarily by the beta subunits. This Angiopteris lygodiifolia (Turnip fern) protein is ATP synthase subunit beta, chloroplastic.